We begin with the raw amino-acid sequence, 324 residues long: [Acyl-carrier-protein] phosphodiesterase PptH (324 aa).

Residues Asp-22, His-24, and Asp-51 each coordinate Mn(2+). The Fe cation site is built by Asp-51, Asn-79, His-205, and His-246. Residue His-248 coordinates Mn(2+).

This sequence belongs to the metallophosphoesterase superfamily. Fe(3+) serves as cofactor. The cofactor is Mn(2+).

It catalyses the reaction holo-[ACP] + H2O = apo-[ACP] + (R)-4'-phosphopantetheine + H(+). Functionally, catalyzes the hydrolysis of the phosphopantetheine group from substrate holo-carrier proteins. The polypeptide is [Acyl-carrier-protein] phosphodiesterase PptH (Mycobacterium tuberculosis (strain ATCC 25618 / H37Rv)).